The following is a 275-amino-acid chain: MKLAVYGKGGIGKSTTSCNISVALAKRGRRVLQIGCDPKHDSTFTLTGFLIPTIIDTLEEKDYHYEDVYAEDVIYEGYGGVHCVEAGGPPAGAGCGGYVVGETMKLLKELRAFEDHDVILFDVLGDVVCGGFAAPLNYADYCVIITDNGFDALFAANRIAASCREKARTHPLKLAGLVGNRTNKRDLIDKYVEAVPMPVLEILPLIEDIRVSRVKGKTIFEMAETDPSLEPVCQYYLNIADHLLACPEGVVPQECPDRALFELLSDFYSRTPVPA.

Residues 10 to 15 (GIGKST) and Lys-39 each bind ATP. Position 14 (Ser-14) interacts with Mg(2+). [4Fe-4S] cluster is bound by residues Cys-95 and Cys-129. 180–181 (NR) contacts ATP.

Belongs to the NifH/BchL/ChlL family. As to quaternary structure, homodimer. Protochlorophyllide reductase is composed of three subunits; ChlL, ChlN and ChlB. [4Fe-4S] cluster serves as cofactor.

It catalyses the reaction chlorophyllide a + oxidized 2[4Fe-4S]-[ferredoxin] + 2 ADP + 2 phosphate = protochlorophyllide a + reduced 2[4Fe-4S]-[ferredoxin] + 2 ATP + 2 H2O. It participates in porphyrin-containing compound metabolism; chlorophyll biosynthesis (light-independent). Functionally, component of the dark-operative protochlorophyllide reductase (DPOR) that uses Mg-ATP and reduced ferredoxin to reduce ring D of protochlorophyllide (Pchlide) to form chlorophyllide a (Chlide). This reaction is light-independent. The L component serves as a unique electron donor to the NB-component of the complex, and binds Mg-ATP. The protein is Light-independent protochlorophyllide reductase iron-sulfur ATP-binding protein of Gloeobacter violaceus (strain ATCC 29082 / PCC 7421).